The sequence spans 495 residues: Membrane-bound lytic murein transglycosylase F (495 aa).

A signal peptide spans 1–29 (MEIRKLSLSTIRSIITSLSVLVLVISASA). Residues 30–273 (TLVRSTPPNV…VTKHFFERHI (244 aa)) form a non-LT domain region. An LT domain region spans residues 274–495 (DEVTTGEAMV…TAAQGENLSL (222 aa)). E320 is an active-site residue.

The protein in the N-terminal section; belongs to the bacterial solute-binding protein 3 family. This sequence in the C-terminal section; belongs to the transglycosylase Slt family.

The protein localises to the cell outer membrane. It catalyses the reaction Exolytic cleavage of the (1-&gt;4)-beta-glycosidic linkage between N-acetylmuramic acid (MurNAc) and N-acetylglucosamine (GlcNAc) residues in peptidoglycan, from either the reducing or the non-reducing ends of the peptidoglycan chains, with concomitant formation of a 1,6-anhydrobond in the MurNAc residue.. In terms of biological role, murein-degrading enzyme that degrades murein glycan strands and insoluble, high-molecular weight murein sacculi, with the concomitant formation of a 1,6-anhydromuramoyl product. Lytic transglycosylases (LTs) play an integral role in the metabolism of the peptidoglycan (PG) sacculus. Their lytic action creates space within the PG sacculus to allow for its expansion as well as for the insertion of various structures such as secretion systems and flagella. The chain is Membrane-bound lytic murein transglycosylase F from Cellvibrio japonicus (strain Ueda107) (Pseudomonas fluorescens subsp. cellulosa).